Consider the following 363-residue polypeptide: S-adenosylmethionine:tRNA ribosyltransferase-isomerase (363 aa).

The protein belongs to the QueA family. In terms of assembly, monomer.

The protein resides in the cytoplasm. It catalyses the reaction 7-aminomethyl-7-carbaguanosine(34) in tRNA + S-adenosyl-L-methionine = epoxyqueuosine(34) in tRNA + adenine + L-methionine + 2 H(+). It functions in the pathway tRNA modification; tRNA-queuosine biosynthesis. Transfers and isomerizes the ribose moiety from AdoMet to the 7-aminomethyl group of 7-deazaguanine (preQ1-tRNA) to give epoxyqueuosine (oQ-tRNA). This chain is S-adenosylmethionine:tRNA ribosyltransferase-isomerase, found in Mannheimia succiniciproducens (strain KCTC 0769BP / MBEL55E).